The primary structure comprises 268 residues: tRNA pseudouridine synthase A (268 aa).

D52 (nucleophile) is an active-site residue. Y110 contacts substrate.

The protein belongs to the tRNA pseudouridine synthase TruA family. In terms of assembly, homodimer.

It catalyses the reaction uridine(38/39/40) in tRNA = pseudouridine(38/39/40) in tRNA. Formation of pseudouridine at positions 38, 39 and 40 in the anticodon stem and loop of transfer RNAs. This Prochlorococcus marinus (strain MIT 9515) protein is tRNA pseudouridine synthase A.